The chain runs to 269 residues: tRNA pseudouridine synthase A (269 aa).

Asp55 serves as the catalytic Nucleophile. Tyr111 serves as a coordination point for substrate.

This sequence belongs to the tRNA pseudouridine synthase TruA family.

The catalysed reaction is uridine(38/39/40) in tRNA = pseudouridine(38/39/40) in tRNA. Functionally, formation of pseudouridine at positions 38, 39 and 40 in the anticodon stem and loop of transfer RNAs. This chain is tRNA pseudouridine synthase A, found in Methanosarcina acetivorans (strain ATCC 35395 / DSM 2834 / JCM 12185 / C2A).